The following is a 229-amino-acid chain: AA9 family lytic polysaccharide monooxygenase E (229 aa).

A signal peptide spans 1-19 (MRSSDITFVLLSVVATVRS). Residue His-20 participates in Cu(2+) binding. A disulfide bridge links Cys-57 with Cys-178. Residue Asn-76 is glycosylated (N-linked (GlcNAc...) asparagine). His-99 lines the Cu(2+) pocket. Residues His-164 and Gln-173 each coordinate O2. Tyr-175 is a binding site for Cu(2+). Asn-217 carries an N-linked (GlcNAc...) asparagine glycan.

This sequence belongs to the polysaccharide monooxygenase AA9 family. Cu(2+) is required as a cofactor.

It localises to the secreted. It carries out the reaction [(1-&gt;4)-beta-D-glucosyl]n+m + reduced acceptor + O2 = 4-dehydro-beta-D-glucosyl-[(1-&gt;4)-beta-D-glucosyl]n-1 + [(1-&gt;4)-beta-D-glucosyl]m + acceptor + H2O.. Functionally, lytic polysaccharide monooxygenase (LPMO) that depolymerizes crystalline and amorphous polysaccharides via the oxidation of scissile alpha- or beta-(1-4)-glycosidic bonds, yielding C1 and C4 oxidation products. Catalysis by LPMOs requires the reduction of the active-site copper from Cu(II) to Cu(I) by a reducing agent and H(2)O(2) or O(2) as a cosubstrate. In Botryotinia fuckeliana (strain B05.10) (Noble rot fungus), this protein is AA9 family lytic polysaccharide monooxygenase E.